The primary structure comprises 61 residues: Large ribosomal subunit protein eL24 (61 aa).

Residues C7, C10, C33, and C37 each contribute to the Zn(2+) site. The C4-type zinc finger occupies 7–37 (CSFCGHEIPPGTGLMYVRNDGTILWFCSSKC).

Belongs to the eukaryotic ribosomal protein eL24 family. Part of the 50S ribosomal subunit. Forms a cluster with proteins L3 and L14. It depends on Zn(2+) as a cofactor.

Its function is as follows. Binds to the 23S rRNA. In Saccharolobus islandicus (strain Y.N.15.51 / Yellowstone #2) (Sulfolobus islandicus), this protein is Large ribosomal subunit protein eL24.